The sequence spans 339 residues: BTB/POZ domain-containing protein KCTD9 (339 aa).

The KHA domain occupies 3–82 (RVTLFLNGSP…PQTDARPPGG (80 aa)). Phosphoserine is present on Ser-11. The BTB domain maps to 89–161 (DWLTLNVGGR…LRHGQLIVND (73 aa)). Pentapeptide repeat domains follow at residues 223-247 (ANLQGVKMLCSNAEGASLRLCNFED), 253-292 (ANLEGANLKGVDMEGSQMTGINLRVATLKNAKLKNCNLRG), and 293-327 (ATLAGTDLENCDLSGCDLQEANLRGSNVKGAIFEE).

As to quaternary structure, forms pentamers. Component of a complex mades of five KCTD9 and five CUL3 subunits.

It functions in the pathway protein modification; protein ubiquitination. Functionally, substrate-specific adapter of a BCR (BTB-CUL3-RBX1) E3 ubiquitin-protein ligase complex, which mediates the ubiquitination of target proteins, leading to their degradation by the proteasome. The sequence is that of BTB/POZ domain-containing protein KCTD9 (Kctd9) from Mus musculus (Mouse).